The chain runs to 315 residues: MVAIDQHDTYSVRVISRSHLSKDIVQVELEESSQRPLPDYEPGSHVDIYVQDDLVRQYSLVKASDAQASYQIAFKVKRDQGSATELMCELLRVGATTRISAPRNAFALDPQARETVLICGGIGITPMVHMAMTLVKAKRPWSMHIASRDGDELDLLGPLGSCSEISRYISSQGDRLPIRDLAERAPANAHLYFCGPEGMLQEFLAATQHRDPATVHYEQFQAAPSTGNEFTVNLARSGAQYVVREGETILDVLRNAGHHVTSSCRQGICGMCETTLISGVPDHRDRLLTDSEKASGRTMLICCSRALSPELTLDL.

1 to 103 (MVAIDQHDTY…GATTRISAPR (103 aa)) contacts FMN. Positions 7 to 109 (HDTYSVRVIS…SAPRNAFALD (103 aa)) constitute an FAD-binding FR-type domain. The 2Fe-2S ferredoxin-type domain occupies 228-315 (NEFTVNLARS…ALSPELTLDL (88 aa)). [2Fe-2S] cluster-binding residues include cysteine 264, cysteine 269, cysteine 272, and cysteine 302.

Belongs to the PDR/VanB family. This dioxygenase system consists of two proteins: phthalate oxygenase and phthalate oxygenase reductase. FMN serves as cofactor.

In Comamonas testosteroni (Pseudomonas testosteroni), this protein is 3-chlorobenzoate-3,4-dioxygenase reductase subunit (cbaB).